The sequence spans 310 residues: Uridine phosphorylase 1 (310 aa).

Phosphate-binding positions include Gly60, Arg94, and 138-141; that span reads RIGT. Uridine contacts are provided by residues 142 to 143 and 217 to 219; these read SG and QGR.

It belongs to the PNP/UDP phosphorylase family. In terms of assembly, homodimer.

The catalysed reaction is uridine + phosphate = alpha-D-ribose 1-phosphate + uracil. The enzyme catalyses 2'-deoxyuridine + phosphate = 2-deoxy-alpha-D-ribose 1-phosphate + uracil. Its pathway is pyrimidine metabolism; UMP biosynthesis via salvage pathway; uracil from uridine (phosphorylase route): step 1/1. In terms of biological role, catalyzes the reversible phosphorylytic cleavage of uridine to uracil and ribose-1-phosphate which can then be utilized as carbon and energy sources or in the rescue of pyrimidine bases for nucleotide synthesis. Shows broad substrate specificity and can also accept deoxyuridine and other analogous compounds. This Homo sapiens (Human) protein is Uridine phosphorylase 1.